Here is an 81-residue protein sequence, read N- to C-terminus: ATP synthase subunit c (81 aa).

2 helical membrane passes run A6–F26 and L57–A77.

It belongs to the ATPase C chain family. As to quaternary structure, F-type ATPases have 2 components, F(1) - the catalytic core - and F(0) - the membrane proton channel. F(1) has five subunits: alpha(3), beta(3), gamma(1), delta(1), epsilon(1). F(0) has four main subunits: a(1), b(1), b'(1) and c(10-14). The alpha and beta chains form an alternating ring which encloses part of the gamma chain. F(1) is attached to F(0) by a central stalk formed by the gamma and epsilon chains, while a peripheral stalk is formed by the delta, b and b' chains.

It localises to the cellular thylakoid membrane. Functionally, f(1)F(0) ATP synthase produces ATP from ADP in the presence of a proton or sodium gradient. F-type ATPases consist of two structural domains, F(1) containing the extramembraneous catalytic core and F(0) containing the membrane proton channel, linked together by a central stalk and a peripheral stalk. During catalysis, ATP synthesis in the catalytic domain of F(1) is coupled via a rotary mechanism of the central stalk subunits to proton translocation. Its function is as follows. Key component of the F(0) channel; it plays a direct role in translocation across the membrane. A homomeric c-ring of between 10-14 subunits forms the central stalk rotor element with the F(1) delta and epsilon subunits. The polypeptide is ATP synthase subunit c (Rippkaea orientalis (strain PCC 8801 / RF-1) (Cyanothece sp. (strain PCC 8801))).